Here is a 202-residue protein sequence, read N- to C-terminus: NAD(P)H dehydrogenase (quinone) 2 (202 aa).

The region spanning 4–190 (VLVLYYSSYG…AGAFHQGEIV (187 aa)) is the Flavodoxin-like domain. FMN is bound by residues 10–15 (SSYGHI) and 78–80 (TRF). Tyr-12 serves as a coordination point for NAD(+). Trp-98 provides a ligand contact to substrate. FMN is bound by residues 113–119 (STGTQHG) and His-134.

Belongs to the WrbA family. FMN serves as cofactor.

The enzyme catalyses a quinone + NADH + H(+) = a quinol + NAD(+). It carries out the reaction a quinone + NADPH + H(+) = a quinol + NADP(+). The protein is NAD(P)H dehydrogenase (quinone) 2 of Rhizobium meliloti (strain 1021) (Ensifer meliloti).